A 784-amino-acid chain; its full sequence is MAASSMSSLTSSYHTTAMPSSNSVVPPFDARNLEIKTKSIEQTLIPLVTQITTLVNYKESYMASGKPKSERAMRAALKIGSAVEAAIERFVCVGETIADENADIQPEMYDACTEARLAGASMANLSCACNDDPNSVVDKAVLVRASRQLLSSVTRVLLLADRVLVKQVLRAEDKIAFSLSRLESTRSFNDFVKVFAVFGGEMVELAHRSGDRQHDLKSEKRKAQMSIARTSLERLTMLLLTASKTYLRHPDCDSALQCRDGVFYQMKLSLELIAICVCDGILTTEKSRYIQDEPDMPIDIALQLTANAAIKQLTEMLEMIRMTVRVGAGVRERIVSALDALCQLTQDFTDSAYTPHHQREQILDFLEECRFEMTNLIQPDENEQLAASGLEVTVERLNRRLKDLSKQLQIVAMEQISEVLRANEDQVLLSSMKACAVSGDIDGVEKYMHKFREHADHMQEVCRLLHHISITDALHVHTGHVERNMRALAPLTILAGRTLCVHPSSRIARENLEVFCDTWGQAVNDLSRVAKESDVAANGRVAAEKQAYMSLPRPGKHGTTQKPSKPITLDVEDQQKMAKVGLEMKLLTSEVDAEAEKWDEYAENDIVKRAKAMSSMAYNMYLFTRGDGPLKTTHDLFTQAEFFAEQANQMYRTVREFSYEVPGSAEKSDLSAILERIPLHCQQLQVMVKSPTVGKTATFGKVDSVIQETKNLMNEIAKLVTASFVCATKYEIEFRGGSVNGRTGADGERTSRESTVWRRTPSIRRAAPPTSSHLSANNSSSIHI.

The interval 35 to 247 is vinculin/alpha-catenin homology 1 (VH1) region; that stretch reads IKTKSIEQTL…LLLTASKTYL (213 aa). Positions 387–414 form a coiled coil; it reads ASGLEVTVERLNRRLKDLSKQLQIVAME. Residues 552–696 form a vinculin/alpha-catenin homology 2 (VH2) region region; the sequence is PRPGKHGTTQ…MVKSPTVGKT (145 aa). The segment at 737–784 is disordered; the sequence is GSVNGRTGADGERTSRESTVWRRTPSIRRAAPPTSSHLSANNSSSIHI. The segment covering 745–756 has biased composition (basic and acidic residues); that stretch reads ADGERTSRESTV. The span at 771-784 shows a compositional bias: low complexity; the sequence is SSHLSANNSSSIHI.

It belongs to the vinculin/alpha-catenin family. As to quaternary structure, interacts with slo-1 (via C-terminus); the interaction is required for localization of slo-1 to dense bodies in body wall muscle cells. Interacts (via N-terminus) with dystrophin complex member dyb-1 (via C-terminus); the interaction is required for localization of the dystrophin complex and ctn-1 near dense bodies in muscle cells. As to expression, expressed in body wall muscles, vulval muscles, stomatointestinal cells and pharyngeal muscle cells. Expressed in enteric muscles, nerve ring neurons and in the ventral nerve cord.

The protein localises to the cytoplasm. In terms of biological role, required for slo-1 potassium ion channel clustering at presynaptic terminals and in egg-laying muscles; clustering of slo-1 mediates the intoxicating and sedatory effects of ethanol on worms. Required for slo-1 localization to dense bodies in body wall muscle cells. Maintains the localization of the dystrophin complex near muscle cell dense bodies via its interaction with complex member dyb-1 which is required for slo-1 localization in muscle while slo-1 localization in neurons is independent of the dystrophin complex. This Caenorhabditis elegans protein is Alpha-catulin.